Consider the following 214-residue polypeptide: Pyridoxine/pyridoxamine 5'-phosphate oxidase (214 aa).

Substrate-binding positions include 9 to 12 and Lys-67; that span reads RREY. Residues 62-67, 77-78, Arg-83, Lys-84, and Gln-106 each bind FMN; these read RTVLLK and YS. Tyr-124, Arg-128, and Ser-132 together coordinate substrate. FMN contacts are provided by residues 141–142 and Trp-186; that span reads QS. 192-194 provides a ligand contact to substrate; the sequence is RLH. Residue Arg-196 coordinates FMN.

This sequence belongs to the pyridoxamine 5'-phosphate oxidase family. Homodimer. FMN is required as a cofactor.

The enzyme catalyses pyridoxamine 5'-phosphate + O2 + H2O = pyridoxal 5'-phosphate + H2O2 + NH4(+). The catalysed reaction is pyridoxine 5'-phosphate + O2 = pyridoxal 5'-phosphate + H2O2. It functions in the pathway cofactor metabolism; pyridoxal 5'-phosphate salvage; pyridoxal 5'-phosphate from pyridoxamine 5'-phosphate: step 1/1. Its pathway is cofactor metabolism; pyridoxal 5'-phosphate salvage; pyridoxal 5'-phosphate from pyridoxine 5'-phosphate: step 1/1. Catalyzes the oxidation of either pyridoxine 5'-phosphate (PNP) or pyridoxamine 5'-phosphate (PMP) into pyridoxal 5'-phosphate (PLP). The chain is Pyridoxine/pyridoxamine 5'-phosphate oxidase from Porphyromonas gingivalis (strain ATCC 33277 / DSM 20709 / CIP 103683 / JCM 12257 / NCTC 11834 / 2561).